We begin with the raw amino-acid sequence, 366 residues long: Aminomethyltransferase (366 aa).

Belongs to the GcvT family. As to quaternary structure, the glycine cleavage system is composed of four proteins: P, T, L and H.

It carries out the reaction N(6)-[(R)-S(8)-aminomethyldihydrolipoyl]-L-lysyl-[protein] + (6S)-5,6,7,8-tetrahydrofolate = N(6)-[(R)-dihydrolipoyl]-L-lysyl-[protein] + (6R)-5,10-methylene-5,6,7,8-tetrahydrofolate + NH4(+). The glycine cleavage system catalyzes the degradation of glycine. This chain is Aminomethyltransferase, found in Bacillus cereus (strain ZK / E33L).